The primary structure comprises 316 residues: Methionyl-tRNA formyltransferase (316 aa).

117 to 120 lines the (6S)-5,6,7,8-tetrahydrofolate pocket; that stretch reads SLLP.

This sequence belongs to the Fmt family.

It carries out the reaction L-methionyl-tRNA(fMet) + (6R)-10-formyltetrahydrofolate = N-formyl-L-methionyl-tRNA(fMet) + (6S)-5,6,7,8-tetrahydrofolate + H(+). Its function is as follows. Attaches a formyl group to the free amino group of methionyl-tRNA(fMet). The formyl group appears to play a dual role in the initiator identity of N-formylmethionyl-tRNA by promoting its recognition by IF2 and preventing the misappropriation of this tRNA by the elongation apparatus. This chain is Methionyl-tRNA formyltransferase, found in Janthinobacterium sp. (strain Marseille) (Minibacterium massiliensis).